An 834-amino-acid chain; its full sequence is Glycerol-3-phosphate acyltransferase (834 aa).

The HXXXXD motif motif lies at 304-309; the sequence is CHRSHM. Positions 800–834 are disordered; it reads SVSMPAETSNQPEAPETPETPETPETPEPEGKTES.

Belongs to the GPAT/DAPAT family.

The protein resides in the cell inner membrane. The enzyme catalyses sn-glycerol 3-phosphate + an acyl-CoA = a 1-acyl-sn-glycero-3-phosphate + CoA. The protein operates within phospholipid metabolism; CDP-diacylglycerol biosynthesis; CDP-diacylglycerol from sn-glycerol 3-phosphate: step 1/3. In Yersinia pseudotuberculosis serotype I (strain IP32953), this protein is Glycerol-3-phosphate acyltransferase.